The following is a 373-amino-acid chain: Dof zinc finger protein 3 (373 aa).

The tract at residues M1–E23 is disordered. The span at V10–E23 shows a compositional bias: basic and acidic residues. The Dof-type zinc-finger motif lies at P45–R99. The Zn(2+) site is built by C47, C50, C72, and C75. The disordered stretch occupies residues A297 to A327.

In terms of assembly, interacts with RISBZ1/BZIP58.

It is found in the nucleus. Transcriptional activator that binds specifically to the DNA consensus core sequence 5'-AAAG-3' also known as prolamin box. Can activate the expression of genes encoding for the seed storage proteins glutelin, prolamin and globulin. Functions synergistically with RISBZ/BZIP58 to positively regulate quantitatively many seed storage proteins. Functions synergistically with RISBZ1/BZIP58 to positively regulate some metabolic enzymes, such as alanine aminotransferase and pyruvate phosphate dikinase, that are expressed in developing seeds. Functions synergistically with RISBZ1/BZIP58 to positively regulate genes that are key players in the development of aleurone layers. Functions synergistically with RISBZ1/BZIP58 to positively regulate the glutelin GLUD-1 gene in endosperm of developing seeds. Can activate the expression of the bifunctional lysine-degrading enzyme, lysine ketoglutarate reductase/saccharopine dehydrogenase (LKR/SDH), one of the key regulators determining free lysine content in plants. In germinating seeds, involved in the gibberellin-mediated activation of the alpha-amylase AMY1.1/AMY1A gene. The polypeptide is Dof zinc finger protein 3 (Oryza sativa subsp. japonica (Rice)).